Reading from the N-terminus, the 121-residue chain is Protein yippee-like 5 (121 aa).

The Yippee domain maps to 13–110 (RLFSCANCDT…LERALVRESE (98 aa)). Positions 17, 20, 73, and 76 each coordinate Zn(2+). At Ser-118 the chain carries Phosphoserine.

The protein belongs to the yippee family. As to quaternary structure, identified in the CTLH complex that contains GID4, RANBP9 and/or RANBP10, MKLN1, MAEA, RMND5A (or alternatively its paralog RMND5B), GID8, ARMC8, WDR26 and YPEL5. Within this complex, MAEA, RMND5A (or alternatively its paralog RMND5B), GID8, WDR26, and RANBP9 and/or RANBP10 form the catalytic core, while GID4, MKLN1, ARMC8 and YPEL5 have ancillary roles. Interacts with RANBP9 and RANBP10.

It is found in the nucleus. The protein localises to the cytoplasm. The protein resides in the cytoskeleton. Its subcellular location is the microtubule organizing center. It localises to the centrosome. It is found in the spindle pole. The protein localises to the midbody. Component of the CTLH E3 ubiquitin-protein ligase complex that selectively accepts ubiquitin from UBE2H and mediates ubiquitination and subsequent proteasomal degradation of the transcription factor HBP1. Required for normal cell proliferation. In Bos taurus (Bovine), this protein is Protein yippee-like 5 (YPEL5).